Here is a 1399-residue protein sequence, read N- to C-terminus: DNA-directed RNA polymerase subunit beta' (1399 aa).

4 residues coordinate Zn(2+): C70, C72, C85, and C88. Mg(2+) contacts are provided by D460, D462, and D464. Zn(2+) is bound by residues C814, C888, C895, and C898. A disordered region spans residues 1367 to 1399 (SERKRQRDLGKPQRVSASEAEAALTEALNSSGN). Positions 1382-1399 (SASEAEAALTEALNSSGN) are enriched in low complexity.

This sequence belongs to the RNA polymerase beta' chain family. The RNAP catalytic core consists of 2 alpha, 1 beta, 1 beta' and 1 omega subunit. When a sigma factor is associated with the core the holoenzyme is formed, which can initiate transcription. Mg(2+) is required as a cofactor. The cofactor is Zn(2+).

The enzyme catalyses RNA(n) + a ribonucleoside 5'-triphosphate = RNA(n+1) + diphosphate. Functionally, DNA-dependent RNA polymerase catalyzes the transcription of DNA into RNA using the four ribonucleoside triphosphates as substrates. This Pseudomonas aeruginosa (strain UCBPP-PA14) protein is DNA-directed RNA polymerase subunit beta'.